The primary structure comprises 790 residues: Ribosome biogenesis protein ERB1 (790 aa).

The interval 1–93 is disordered; that stretch reads MAKKNTVTGS…SDELQDDSNS (93 aa). Residues 20–89 show a composition bias toward acidic residues; that stretch reads SPEVSESEEI…SEDFSDELQD (70 aa). Residues 255 to 371 form a required for interaction with NOP7 region; the sequence is RFVPSKHEAK…LRKVPAYQEN (117 aa). The tract at residues 371 to 407 is required for interaction with YTM1; it reads NLRERFERSLDLYLAPRVRHNKLNIDPDSLIPDLPSP. WD repeat units lie at residues 423–462, 470–510, 574–616, 619–657, 660–699, 703–743, and 759–790; these read GHIG…QVYH, KDDD…YEIE, QCRK…SQSP, KSKG…LTKK, PGAR…TPYK, YHEK…DLMT, and VHSL…LWTT.

Belongs to the WD repeat BOP1/ERB1 family. In terms of assembly, component of the NOP7 complex, composed of ERB1, NOP7 and YTM1. The complex is held together by ERB1, which interacts with NOP7 via its N-terminal domain and with YTM1 via a high-affinity interaction between the seven-bladed beta-propeller domains of the 2 proteins. The NOP7 complex associates with the 66S pre-ribosome.

Its subcellular location is the nucleus. It localises to the nucleolus. The protein localises to the nucleoplasm. Component of the NOP7 complex, which is required for maturation of the 25S and 5.8S ribosomal RNAs and formation of the 60S ribosome. This is Ribosome biogenesis protein ERB1 from Meyerozyma guilliermondii (strain ATCC 6260 / CBS 566 / DSM 6381 / JCM 1539 / NBRC 10279 / NRRL Y-324) (Yeast).